Here is a 138-residue protein sequence, read N- to C-terminus: Small ribosomal subunit protein bS6 (138 aa).

Residues 94 to 138 form a disordered region; sequence VKQDGPLPTPKPTSKEDETEKEEVKPTEDKTESPAQEEKKEDSKE. Basic and acidic residues predominate over residues 106-138; sequence TSKEDETEKEEVKPTEDKTESPAQEEKKEDSKE.

Belongs to the bacterial ribosomal protein bS6 family.

Its function is as follows. Binds together with bS18 to 16S ribosomal RNA. In Prochlorococcus marinus (strain NATL1A), this protein is Small ribosomal subunit protein bS6.